The following is a 229-amino-acid chain: uncharacterized protein (229 aa).

The protein to M.pneumoniae MPN_376 central region.

This is an uncharacterized protein from Mycoplasma pneumoniae (strain ATCC 29342 / M129 / Subtype 1) (Mycoplasmoides pneumoniae).